The sequence spans 526 residues: Cytochrome P450 monooxygenase 58 (526 aa).

3 helical membrane passes run 13 to 33 (IASS…LLLI), 115 to 135 (FIMA…GYGK), and 306 to 326 (IGAG…AMTL). Cys451 lines the heme pocket.

Belongs to the cytochrome P450 family. Requires heme as cofactor.

Its subcellular location is the membrane. Its pathway is secondary metabolite biosynthesis. Its function is as follows. Cytochrome P450 monooxygenase that is able to use delta(6)-protoilludene as a substrate to produce delta(6)-protoilludene-8-ol. The protein is Cytochrome P450 monooxygenase 58 of Postia placenta (strain ATCC 44394 / Madison 698-R) (Brown rot fungus).